The sequence spans 382 residues: MNKSGSFYNLETIGGILLFIAAVIAIIIANSPFRVGYEYFLSINGSVSVGNLSITKPLLLWINDGLMAIYFLLIGLEIKREVNRGILSDKTNLLVPALTALAGLIFPALIFIFFNAHHPVYLKGWAIPTATDIAFTLGIVSLLGSRVPFSLKILLTAIAIFDDIAAIVIIALFYTEQLSLLSLSLALVFTLILIGLNYFKCRRISVFMLFGVALWIAVLKSGVHATLAGIVIAMTIPDEGKESMLARLEDGLHHWVVFLILPLFAFANAGVSFVGLDASMFTHPVVLGIGLGLFLGKQLGIFLSLGYFVQFKKFLKADKVNLAQVYGIALICGVGFTMSLFIGSLAYQNYDLSLMPMVKIGVVLGSFIAGLTGFLVLKLKQQ.

11 helical membrane passes run 13–33 (IGGI…NSPF), 58–78 (LLLW…GLEI), 94–114 (LVPA…FIFF), 124–144 (GWAI…SLLG), 153–173 (ILLT…IALF), 179–199 (SLLS…LNYF), 204–224 (ISVF…SGVH), 256–276 (VVFL…FVGL), 285–305 (VVLG…FLSL), 325–345 (VYGI…IGSL), and 357–377 (MVKI…FLVL).

It belongs to the NhaA Na(+)/H(+) (TC 2.A.33) antiporter family.

It is found in the cell inner membrane. It carries out the reaction Na(+)(in) + 2 H(+)(out) = Na(+)(out) + 2 H(+)(in). Na(+)/H(+) antiporter that extrudes sodium in exchange for external protons. This Legionella pneumophila (strain Paris) protein is Na(+)/H(+) antiporter NhaA.